We begin with the raw amino-acid sequence, 583 residues long: Asparagine synthetase, root [glutamine-hydrolyzing] (583 aa).

C2 acts as the For GATase activity in catalysis. In terms of domain architecture, Glutamine amidotransferase type-2 spans 2–185 (CGILAVLGCS…PGHLYSSKDS (184 aa)). L-glutamine-binding positions include 50–54 (RLAIV), 75–77 (NGE), and D98. Residues L231, V267, and 341–342 (SG) contribute to the ATP site. Residues 237 to 516 (DSSLVASITS…PQNSARLTVP (280 aa)) form the Asparagine synthetase domain.

As to expression, roots.

The catalysed reaction is L-aspartate + L-glutamine + ATP + H2O = L-asparagine + L-glutamate + AMP + diphosphate + H(+). It functions in the pathway amino-acid biosynthesis; L-asparagine biosynthesis; L-asparagine from L-aspartate (L-Gln route): step 1/1. This Pisum sativum (Garden pea) protein is Asparagine synthetase, root [glutamine-hydrolyzing] (AS2).